The following is a 180-amino-acid chain: ATP synthase subunit delta (180 aa).

The protein belongs to the ATPase delta chain family. F-type ATPases have 2 components, F(1) - the catalytic core - and F(0) - the membrane proton channel. F(1) has five subunits: alpha(3), beta(3), gamma(1), delta(1), epsilon(1). F(0) has three main subunits: a(1), b(2) and c(10-14). The alpha and beta chains form an alternating ring which encloses part of the gamma chain. F(1) is attached to F(0) by a central stalk formed by the gamma and epsilon chains, while a peripheral stalk is formed by the delta and b chains.

The protein resides in the cell membrane. Its function is as follows. F(1)F(0) ATP synthase produces ATP from ADP in the presence of a proton or sodium gradient. F-type ATPases consist of two structural domains, F(1) containing the extramembraneous catalytic core and F(0) containing the membrane proton channel, linked together by a central stalk and a peripheral stalk. During catalysis, ATP synthesis in the catalytic domain of F(1) is coupled via a rotary mechanism of the central stalk subunits to proton translocation. In terms of biological role, this protein is part of the stalk that links CF(0) to CF(1). It either transmits conformational changes from CF(0) to CF(1) or is implicated in proton conduction. The protein is ATP synthase subunit delta of Dehalococcoides mccartyi (strain ATCC BAA-2266 / KCTC 15142 / 195) (Dehalococcoides ethenogenes (strain 195)).